A 470-amino-acid chain; its full sequence is ATP synthase subunit beta (470 aa).

Residue glycine 148–threonine 155 coordinates ATP.

The protein belongs to the ATPase alpha/beta chains family. F-type ATPases have 2 components, CF(1) - the catalytic core - and CF(0) - the membrane proton channel. CF(1) has five subunits: alpha(3), beta(3), gamma(1), delta(1), epsilon(1). CF(0) has three main subunits: a(1), b(2) and c(9-12). The alpha and beta chains form an alternating ring which encloses part of the gamma chain. CF(1) is attached to CF(0) by a central stalk formed by the gamma and epsilon chains, while a peripheral stalk is formed by the delta and b chains.

It is found in the cell inner membrane. It carries out the reaction ATP + H2O + 4 H(+)(in) = ADP + phosphate + 5 H(+)(out). In terms of biological role, produces ATP from ADP in the presence of a proton gradient across the membrane. The catalytic sites are hosted primarily by the beta subunits. The polypeptide is ATP synthase subunit beta (Teredinibacter turnerae (strain ATCC 39867 / T7901)).